The following is a 286-amino-acid chain: Probable alpha-ketoglutarate-dependent hypophosphite dioxygenase (286 aa).

This sequence belongs to the PhyH family.

Its function is as follows. Required for hypophosphite oxidation. The protein is Probable alpha-ketoglutarate-dependent hypophosphite dioxygenase (htxA) of Stutzerimonas stutzeri (Pseudomonas stutzeri).